The following is a 223-amino-acid chain: Ribonuclease T (223 aa).

Residues 20–194 (VVIDVETAGF…YDTERTAELF (175 aa)) form the Exonuclease domain. Mg(2+) is bound by residues Asp23, Glu25, His181, and Asp186. His181 (proton donor/acceptor) is an active-site residue.

Belongs to the RNase T family. In terms of assembly, homodimer. Mg(2+) serves as cofactor.

Its function is as follows. Trims short 3' overhangs of a variety of RNA species, leaving a one or two nucleotide 3' overhang. Responsible for the end-turnover of tRNA: specifically removes the terminal AMP residue from uncharged tRNA (tRNA-C-C-A). Also appears to be involved in tRNA biosynthesis. In Shewanella baltica (strain OS185), this protein is Ribonuclease T.